Consider the following 819-residue polypeptide: uncharacterized protein (819 aa).

Position 16 is a phosphoserine (Ser16). Disordered stretches follow at residues Ser28–Val83 and Pro96–Ile134. The zn(2)-C6 fungal-type DNA-binding region spans Lys36–Tyr63. 2 stretches are compositionally biased toward polar residues: residues Thr64–Pro77 and Pro96–Ile118.

The protein localises to the nucleus. This is an uncharacterized protein from Schizosaccharomyces pombe (strain 972 / ATCC 24843) (Fission yeast).